A 151-amino-acid chain; its full sequence is Putative pre-16S rRNA nuclease (151 aa).

Belongs to the YqgF nuclease family.

It is found in the cytoplasm. In terms of biological role, could be a nuclease involved in processing of the 5'-end of pre-16S rRNA. In Aster yellows witches'-broom phytoplasma (strain AYWB), this protein is Putative pre-16S rRNA nuclease.